The following is a 486-amino-acid chain: Nuclear distribution protein PAC1 (486 aa).

Positions 66 to 99 (STVLRLQKKIIDLENEISNLNNIINSTNSDNNGI) form a coiled coil. WD repeat units lie at residues 119–158 (QCENIVTTVKLHPNLPLVLNGCNDGNLYIWNISNDDNTIP), 164–205 (AHTR…RTLN), 206–246 (GHEH…SLKS), 249–291 (GHSE…GVAM), 294–328 (GHSHVVETVKFLPSLQANKILDEYITKNTEQFPTI), 329–368 (PLELLKDKTYNQLGFKYCITASRDNTIKLWLIPPPTIAPH), 389–428 (GHSSWVKSLCVHPNGKFIISGSDDKTIKFWDLSGLLETGY), and 437–483 (GHDG…NSIK).

It belongs to the WD repeat LIS1/nudF family. As to quaternary structure, self-associates. Interacts with NDL1 and dynein.

Its subcellular location is the cytoplasm. The protein resides in the cytoskeleton. It is found in the spindle pole. In terms of biological role, positively regulates the activity of the minus-end directed microtubule motor protein dynein. Plays a central role in positioning the mitotic spindle at the bud neck during cell division. Targets cytoplasmic dynein to microtubule plus ends, thereby promoting dynein-mediated microtubule sliding along the bud cortex and consequently the movement of the mitotic spindle to the bud neck. This is Nuclear distribution protein PAC1 from Candida albicans (strain SC5314 / ATCC MYA-2876) (Yeast).